The following is a 573-amino-acid chain: 2-succinyl-5-enolpyruvyl-6-hydroxy-3-cyclohexene-1-carboxylate synthase (573 aa).

Belongs to the TPP enzyme family. MenD subfamily. In terms of assembly, homodimer. It depends on Mg(2+) as a cofactor. Mn(2+) serves as cofactor. The cofactor is thiamine diphosphate.

The enzyme catalyses isochorismate + 2-oxoglutarate + H(+) = 5-enolpyruvoyl-6-hydroxy-2-succinyl-cyclohex-3-ene-1-carboxylate + CO2. It functions in the pathway quinol/quinone metabolism; 1,4-dihydroxy-2-naphthoate biosynthesis; 1,4-dihydroxy-2-naphthoate from chorismate: step 2/7. It participates in quinol/quinone metabolism; menaquinone biosynthesis. Functionally, catalyzes the thiamine diphosphate-dependent decarboxylation of 2-oxoglutarate and the subsequent addition of the resulting succinic semialdehyde-thiamine pyrophosphate anion to isochorismate to yield 2-succinyl-5-enolpyruvyl-6-hydroxy-3-cyclohexene-1-carboxylate (SEPHCHC). The chain is 2-succinyl-5-enolpyruvyl-6-hydroxy-3-cyclohexene-1-carboxylate synthase from Shewanella oneidensis (strain ATCC 700550 / JCM 31522 / CIP 106686 / LMG 19005 / NCIMB 14063 / MR-1).